A 300-amino-acid polypeptide reads, in one-letter code: Erythroblast NAD(P)(+)--arginine ADP-ribosyltransferase (300 aa).

The first 22 residues, 1 to 22 (MEEPLLHAILGLVLLLSTRTDA), serve as a signal peptide directing secretion. Cystine bridges form between Cys51–Cys260 and Cys159–Cys208. The TR mART core domain maps to 70-256 (ETFAEGWRSA…IQLRSQGKSS (187 aa)). The NAD(+) site is built by Tyr107, Arg164, and Gln183. Arg164 is a catalytic residue. Residue Ser186 is part of the active site. NAD(+) is bound at residue Ser217. Glu224 is a catalytic residue. The tract at residues 276 to 300 (SADKSSPLPRSPWPGWAPLAAPHSH) is disordered.

It belongs to the Arg-specific ADP-ribosyltransferase family.

It catalyses the reaction L-arginyl-[protein] + NAD(+) = N(omega)-(ADP-D-ribosyl)-L-arginyl-[protein] + nicotinamide + H(+). This is Erythroblast NAD(P)(+)--arginine ADP-ribosyltransferase (MADPRT) from Gallus gallus (Chicken).